A 73-amino-acid chain; its full sequence is MKANIHPDYHTIKVVMTDGTEYETRSTWGSEGATMNLEIDSKSHPAWTGGNQQLMDRGGRVSKFNKRFGSLGV.

It belongs to the bacterial ribosomal protein bL31 family. Type A subfamily. Part of the 50S ribosomal subunit.

Functionally, binds the 23S rRNA. This Rhizobium rhizogenes (strain K84 / ATCC BAA-868) (Agrobacterium radiobacter) protein is Large ribosomal subunit protein bL31.